Here is a 119-residue protein sequence, read N- to C-terminus: Integration host factor subunit alpha (119 aa).

Residues 96–119 (INGQQGSGKMNGEASHEQLSAEPE) form a disordered region.

This sequence belongs to the bacterial histone-like protein family. As to quaternary structure, heterodimer of an alpha and a beta chain.

This protein is one of the two subunits of integration host factor, a specific DNA-binding protein that functions in genetic recombination as well as in transcriptional and translational control. This is Integration host factor subunit alpha from Bradyrhizobium sp. (strain BTAi1 / ATCC BAA-1182).